The following is a 562-amino-acid chain: Potassium-transporting ATPase potassium-binding subunit (562 aa).

A run of 12 helical transmembrane segments spans residues 6-26, 62-82, 132-152, 175-195, 253-273, 283-303, 327-347, 356-376, 379-399, 416-436, 483-503, and 524-544; these read FLLIASFMLVLFVLSRPLGGF, YALAILCFNLLGIVLLFVLLM, GLTVQNFLSAATGIAVAFALI, LYVLLPIALIIALIFVSQGVL, FVQMLAIFLIPCALCFAFGQV, LIWAMSLIFIVAVVVVMYAEL, FGILATSLYAVVTTAASCGAV, ALGGMIPLWLMQIGEVVFGGV, GLYGMLLFVLLTVFIAGLMIG, MTALAILVTPTIVLLGTALAL, LLLAAAMFIGRFGVILPVLAI, and GLLFIGLLIGTVLLVGALTFI.

Belongs to the KdpA family. The system is composed of three essential subunits: KdpA, KdpB and KdpC.

It is found in the cell inner membrane. Part of the high-affinity ATP-driven potassium transport (or Kdp) system, which catalyzes the hydrolysis of ATP coupled with the electrogenic transport of potassium into the cytoplasm. This subunit binds the periplasmic potassium ions and delivers the ions to the membrane domain of KdpB through an intramembrane tunnel. This Yersinia pestis bv. Antiqua (strain Antiqua) protein is Potassium-transporting ATPase potassium-binding subunit.